Consider the following 395-residue polypeptide: MINRQHIQLSLQSLSLVAGFMVWVLISSLISQITLDIHLSKGEISLVTAIPVILGSLLRIPLGYLTNRFGARLMFMVSFILLLFPVFWISIADSLFDLIAGGFFLGIGGAVFSIGVTSLPKYYPKEKHGVVNGIYGAGNIGTAVTTFAAPVIAQAVGWKSTVQMYLILLAVFALLHVLFGDRHEKKVKVSVKTQIKAVYRNHVLWFLSLFYFITFGAFVAFTIYLPNFLVEHFGLNPADAGLRTAGFIAVSTLLRPAGGFLADKMSPLRILMFVFAGLTLSGIILSFSPTIGLYTFGSLTVAVCSGIGNGTVFKLVPFYFSKQAGIANGIVSAMGGLGGFFPPLILASVFQATGQYAIGFMALSEVALASFVLVIWMYWQERMKTHTERNSQSIN.

12 helical membrane passes run serine 15–leucine 35, isoleucine 44–tyrosine 64, leucine 73–aspartate 93, phenylalanine 96–valine 116, glycine 133–alanine 153, serine 160–glycine 180, valine 203–isoleucine 223, alanine 240–alanine 262, leucine 271–isoleucine 291, leucine 293–phenylalanine 313, isoleucine 330–phenylalanine 350, and alanine 357–methionine 377.

Belongs to the major facilitator superfamily. Nitrate/nitrite porter (TC 2.A.1.8) family.

The protein localises to the cell membrane. Involved in excretion of nitrite produced by the dissimilatory reduction of nitrate. The protein is Nitrite extrusion protein (narK) of Bacillus subtilis (strain 168).